Reading from the N-terminus, the 428-residue chain is MDTIYALASARGKAGVAVLRLSGPQAYEAVAAFGVSLPEVRRAALRRLTWNGEVLDEALILLFAEGASFTGERSAEIHLHGSAAAVSSVLQALSELPGLRLADAGEFTRRALDNGRLDLAQVEGLADLLDSETEAQRRQAMRVFSGAIGKRTERWRSDLIRAAALLEATIDFADEDVPVDVTPEVRGLLERLISDLKREVDGSRVAERIRDGFEVAIIGAPNAGKSTLLNALAQREAAITSEVAGTTRDVIEVRMNLGGLAVTLLDTAGLRETHDPVEALGIDRALTRARAADLRIFLLDQSGEVVGLEPEADDLIVQGKADTRLTRGLSVSGLTGDGIQELVEALQDRLLARTAGAGSFTRERHRLAMERAIRAMESAHVQLMQGVPHPELAAEDLRLALRALDSLVGRVDVEALLGEIFSSFCIGK.

The (6S)-5-formyl-5,6,7,8-tetrahydrofolate site is built by arginine 20, glutamate 76, and arginine 116. In terms of domain architecture, TrmE-type G spans 212-351; sequence GFEVAIIGAP…LVEALQDRLL (140 aa). Asparagine 222 contacts K(+). GTP-binding positions include 222–227, 241–247, and 266–269; these read NAGKST, SEVAGTT, and DTAG. Residue serine 226 participates in Mg(2+) binding. K(+)-binding residues include serine 241, valine 243, and threonine 246. Threonine 247 serves as a coordination point for Mg(2+). Lysine 428 contributes to the (6S)-5-formyl-5,6,7,8-tetrahydrofolate binding site.

It belongs to the TRAFAC class TrmE-Era-EngA-EngB-Septin-like GTPase superfamily. TrmE GTPase family. In terms of assembly, homodimer. Heterotetramer of two MnmE and two MnmG subunits. Requires K(+) as cofactor.

The protein localises to the cytoplasm. Functionally, exhibits a very high intrinsic GTPase hydrolysis rate. Involved in the addition of a carboxymethylaminomethyl (cmnm) group at the wobble position (U34) of certain tRNAs, forming tRNA-cmnm(5)s(2)U34. This is tRNA modification GTPase MnmE from Cereibacter sphaeroides (strain ATCC 17025 / ATH 2.4.3) (Rhodobacter sphaeroides).